A 363-amino-acid chain; its full sequence is S-adenosylmethionine:tRNA ribosyltransferase-isomerase (363 aa).

This sequence belongs to the QueA family. Monomer.

It localises to the cytoplasm. The catalysed reaction is 7-aminomethyl-7-carbaguanosine(34) in tRNA + S-adenosyl-L-methionine = epoxyqueuosine(34) in tRNA + adenine + L-methionine + 2 H(+). The protein operates within tRNA modification; tRNA-queuosine biosynthesis. Functionally, transfers and isomerizes the ribose moiety from AdoMet to the 7-aminomethyl group of 7-deazaguanine (preQ1-tRNA) to give epoxyqueuosine (oQ-tRNA). The protein is S-adenosylmethionine:tRNA ribosyltransferase-isomerase of Mannheimia succiniciproducens (strain KCTC 0769BP / MBEL55E).